Reading from the N-terminus, the 359-residue chain is 4-hydroxy-3-methylbut-2-en-1-yl diphosphate synthase (flavodoxin) (359 aa).

Residues cysteine 264, cysteine 267, cysteine 299, and glutamate 306 each coordinate [4Fe-4S] cluster.

Belongs to the IspG family. It depends on [4Fe-4S] cluster as a cofactor.

It carries out the reaction (2E)-4-hydroxy-3-methylbut-2-enyl diphosphate + oxidized [flavodoxin] + H2O + 2 H(+) = 2-C-methyl-D-erythritol 2,4-cyclic diphosphate + reduced [flavodoxin]. It functions in the pathway isoprenoid biosynthesis; isopentenyl diphosphate biosynthesis via DXP pathway; isopentenyl diphosphate from 1-deoxy-D-xylulose 5-phosphate: step 5/6. Its function is as follows. Converts 2C-methyl-D-erythritol 2,4-cyclodiphosphate (ME-2,4cPP) into 1-hydroxy-2-methyl-2-(E)-butenyl 4-diphosphate. The chain is 4-hydroxy-3-methylbut-2-en-1-yl diphosphate synthase (flavodoxin) from Helicobacter pylori (strain ATCC 700392 / 26695) (Campylobacter pylori).